A 266-amino-acid chain; its full sequence is Small ribosomal subunit protein eS1 (266 aa).

Residues Gly233–Val266 form a disordered region. Over residues Ser244 to Gly257 the composition is skewed to basic and acidic residues.

It belongs to the eukaryotic ribosomal protein eS1 family. In terms of assembly, component of the small ribosomal subunit. Mature ribosomes consist of a small (40S) and a large (60S) subunit. The 40S subunit contains about 33 different proteins and 1 molecule of RNA (18S). The 60S subunit contains about 49 different proteins and 3 molecules of RNA (28S, 5.8S and 5S). Part of the small subunit (SSU) processome, composed of more than 70 proteins and the RNA chaperone small nucleolar RNA (snoRNA) U3.

It localises to the cytoplasm. It is found in the nucleus. Its subcellular location is the nucleolus. Its function is as follows. Component of the small ribosomal subunit. The ribosome is a large ribonucleoprotein complex responsible for the synthesis of proteins in the cell. Part of the small subunit (SSU) processome, first precursor of the small eukaryotic ribosomal subunit. During the assembly of the SSU processome in the nucleolus, many ribosome biogenesis factors, an RNA chaperone and ribosomal proteins associate with the nascent pre-rRNA and work in concert to generate RNA folding, modifications, rearrangements and cleavage as well as targeted degradation of pre-ribosomal RNA by the RNA exosome. May play a role during erythropoiesis. The chain is Small ribosomal subunit protein eS1 (rps3a) from Salmo salar (Atlantic salmon).